The sequence spans 347 residues: Holliday junction branch migration complex subunit RuvB (347 aa).

The interval 1–186 (MKDENSINFL…FGITARFELY (186 aa)) is large ATPase domain (RuvB-L). Residues L25, R26, G67, K70, T71, T72, 133-135 (EDY), R176, Y186, and R223 contribute to the ATP site. Residue T71 participates in Mg(2+) binding. Residues 187–257 (SEIELVEIIK…IVSIGLEMLR (71 aa)) form a small ATPAse domain (RuvB-S) region. The head domain (RuvB-H) stretch occupies residues 260-347 (GEGLDEQDRN…DISENQRVSF (88 aa)). Residues R315 and R320 each coordinate DNA.

Belongs to the RuvB family. As to quaternary structure, homohexamer. Forms an RuvA(8)-RuvB(12)-Holliday junction (HJ) complex. HJ DNA is sandwiched between 2 RuvA tetramers; dsDNA enters through RuvA and exits via RuvB. An RuvB hexamer assembles on each DNA strand where it exits the tetramer. Each RuvB hexamer is contacted by two RuvA subunits (via domain III) on 2 adjacent RuvB subunits; this complex drives branch migration. In the full resolvosome a probable DNA-RuvA(4)-RuvB(12)-RuvC(2) complex forms which resolves the HJ.

It is found in the cytoplasm. The enzyme catalyses ATP + H2O = ADP + phosphate + H(+). The RuvA-RuvB-RuvC complex processes Holliday junction (HJ) DNA during genetic recombination and DNA repair, while the RuvA-RuvB complex plays an important role in the rescue of blocked DNA replication forks via replication fork reversal (RFR). RuvA specifically binds to HJ cruciform DNA, conferring on it an open structure. The RuvB hexamer acts as an ATP-dependent pump, pulling dsDNA into and through the RuvAB complex. RuvB forms 2 homohexamers on either side of HJ DNA bound by 1 or 2 RuvA tetramers; 4 subunits per hexamer contact DNA at a time. Coordinated motions by a converter formed by DNA-disengaged RuvB subunits stimulates ATP hydrolysis and nucleotide exchange. Immobilization of the converter enables RuvB to convert the ATP-contained energy into a lever motion, pulling 2 nucleotides of DNA out of the RuvA tetramer per ATP hydrolyzed, thus driving DNA branch migration. The RuvB motors rotate together with the DNA substrate, which together with the progressing nucleotide cycle form the mechanistic basis for DNA recombination by continuous HJ branch migration. Branch migration allows RuvC to scan DNA until it finds its consensus sequence, where it cleaves and resolves cruciform DNA. This is Holliday junction branch migration complex subunit RuvB from Borrelia garinii subsp. bavariensis (strain ATCC BAA-2496 / DSM 23469 / PBi) (Borreliella bavariensis).